A 104-amino-acid polypeptide reads, in one-letter code: Large ribosomal subunit protein uL24 (104 aa).

The protein belongs to the universal ribosomal protein uL24 family. As to quaternary structure, part of the 50S ribosomal subunit.

One of two assembly initiator proteins, it binds directly to the 5'-end of the 23S rRNA, where it nucleates assembly of the 50S subunit. In terms of biological role, one of the proteins that surrounds the polypeptide exit tunnel on the outside of the subunit. The sequence is that of Large ribosomal subunit protein uL24 from Mesorhizobium japonicum (strain LMG 29417 / CECT 9101 / MAFF 303099) (Mesorhizobium loti (strain MAFF 303099)).